The chain runs to 624 residues: DNA-directed RNA polymerase subunit gamma (624 aa).

Residues Cys70, Cys72, Cys85, and Cys88 each contribute to the Zn(2+) site. The Mg(2+) site is built by Asp466, Asp468, and Asp470.

It belongs to the RNA polymerase beta' chain family. RpoC1 subfamily. In cyanobacteria the RNAP catalytic core is composed of 2 alpha, 1 beta, 1 beta', 1 gamma and 1 omega subunit. When a sigma factor is associated with the core the holoenzyme is formed, which can initiate transcription. Requires Mg(2+) as cofactor. The cofactor is Zn(2+).

The enzyme catalyses RNA(n) + a ribonucleoside 5'-triphosphate = RNA(n+1) + diphosphate. DNA-dependent RNA polymerase catalyzes the transcription of DNA into RNA using the four ribonucleoside triphosphates as substrates. The polypeptide is DNA-directed RNA polymerase subunit gamma (Synechococcus elongatus (strain ATCC 33912 / PCC 7942 / FACHB-805) (Anacystis nidulans R2)).